A 132-amino-acid chain; its full sequence is Arginine decarboxylase proenzyme (132 aa).

The active-site Schiff-base intermediate with substrate; via pyruvic acid is Ser-70. Residue Ser-70 is modified to Pyruvic acid (Ser); by autocatalysis. Catalysis depends on His-75, which acts as the Proton acceptor; for processing activity. The Proton donor; for catalytic activity role is filled by Cys-90.

The protein belongs to the prokaryotic AdoMetDC family. Type 1 subfamily. In terms of assembly, heterooctamer of four alpha and four beta chains arranged as a tetramer of alpha/beta heterodimers. Requires pyruvate as cofactor. Post-translationally, is synthesized initially as an inactive proenzyme. Formation of the active enzyme involves a self-maturation process in which the active site pyruvoyl group is generated from an internal serine residue via an autocatalytic post-translational modification. Two non-identical subunits are generated from the proenzyme in this reaction, and the pyruvate is formed at the N-terminus of the alpha chain, which is derived from the carboxyl end of the proenzyme. The post-translation cleavage follows an unusual pathway, termed non-hydrolytic serinolysis, in which the side chain hydroxyl group of the serine supplies its oxygen atom to form the C-terminus of the beta chain, while the remainder of the serine residue undergoes an oxidative deamination to produce ammonia and the pyruvoyl group blocking the N-terminus of the alpha chain.

The catalysed reaction is L-arginine + H(+) = agmatine + CO2. Its pathway is amine and polyamine biosynthesis; agmatine biosynthesis; agmatine from L-arginine: step 1/1. Functionally, specifically catalyzes the decarboxylation of L-arginine to agmatine. Has no S-adenosylmethionine decarboxylase (AdoMetDC) activity. This chain is Arginine decarboxylase proenzyme, found in Aeropyrum pernix (strain ATCC 700893 / DSM 11879 / JCM 9820 / NBRC 100138 / K1).